Consider the following 311-residue polypeptide: MKLAVYGKGGIGKSTVSCNLSIALAKRGKKVLQIGCDPKHDSTFTLTGFLIPTIIDTLQSKDYHYEDIWPEDVIYAGYGGVDCVEAGGPPAGAGCGGYVVGETVKLLKELNAFYEYDVILFDVLGDVVCGGFAAPLNYADYCLIVTDNGFDALFAANRIVASVREKARTHPLRLAGLIGNRTATRELIDKYVEVCRMPVLEVLPLIEEIRISRVKGKTIFELEELEPNLKSIGEYYLNIADQLLAQPEGIVPQELADRDLFTLLSSFYLSDQQTEKAYSSIQHVHGSVGEGCSAQNSEQNQTANDYSFEFI.

ATP is bound by residues 10 to 15 (GIGKST) and lysine 39. Serine 14 serves as a coordination point for Mg(2+). Residues cysteine 95 and cysteine 129 each contribute to the [4Fe-4S] cluster site. ATP is bound at residue 180 to 181 (NR).

This sequence belongs to the NifH/BchL/ChlL family. Homodimer. Protochlorophyllide reductase is composed of three subunits; ChlL, ChlN and ChlB. [4Fe-4S] cluster is required as a cofactor.

The protein localises to the plastid. It localises to the chloroplast. The catalysed reaction is chlorophyllide a + oxidized 2[4Fe-4S]-[ferredoxin] + 2 ADP + 2 phosphate = protochlorophyllide a + reduced 2[4Fe-4S]-[ferredoxin] + 2 ATP + 2 H2O. Its pathway is porphyrin-containing compound metabolism; chlorophyll biosynthesis (light-independent). Functionally, component of the dark-operative protochlorophyllide reductase (DPOR) that uses Mg-ATP and reduced ferredoxin to reduce ring D of protochlorophyllide (Pchlide) to form chlorophyllide a (Chlide). This reaction is light-independent. The L component serves as a unique electron donor to the NB-component of the complex, and binds Mg-ATP. This is Light-independent protochlorophyllide reductase iron-sulfur ATP-binding protein from Oltmannsiellopsis viridis (Marine flagellate).